Here is a 235-residue protein sequence, read N- to C-terminus: Serine protease SplA (235 aa).

Positions 1-35 are cleaved as a signal peptide; sequence MNKNVMVKGLTALTILTSLGFAENISNQPHSIAKA. Catalysis depends on charge relay system residues His-74, Asp-113, and Ser-189.

This sequence belongs to the peptidase S1B family.

It is found in the secreted. The sequence is that of Serine protease SplA (splA) from Staphylococcus aureus (strain Mu3 / ATCC 700698).